We begin with the raw amino-acid sequence, 180 residues long: Aspartate 1-decarboxylase (180 aa).

The Schiff-base intermediate with substrate; via pyruvic acid role is filled by Ser-24. Ser-24 carries the post-translational modification Pyruvic acid (Ser). Substrate is bound at residue Thr-56. The Proton donor role is filled by Tyr-57. 72–74 (GAA) is a binding site for substrate.

This sequence belongs to the PanD family. As to quaternary structure, heterooctamer of four alpha and four beta subunits. Requires pyruvate as cofactor. Is synthesized initially as an inactive proenzyme, which is activated by self-cleavage at a specific serine bond to produce a beta-subunit with a hydroxyl group at its C-terminus and an alpha-subunit with a pyruvoyl group at its N-terminus.

Its subcellular location is the cytoplasm. The enzyme catalyses L-aspartate + H(+) = beta-alanine + CO2. The protein operates within cofactor biosynthesis; (R)-pantothenate biosynthesis; beta-alanine from L-aspartate: step 1/1. Catalyzes the pyruvoyl-dependent decarboxylation of aspartate to produce beta-alanine. This chain is Aspartate 1-decarboxylase, found in Paramagnetospirillum magneticum (strain ATCC 700264 / AMB-1) (Magnetospirillum magneticum).